A 202-amino-acid polypeptide reads, in one-letter code: Imidazoleglycerol-phosphate dehydratase (202 aa).

This sequence belongs to the imidazoleglycerol-phosphate dehydratase family.

The protein resides in the cytoplasm. It carries out the reaction D-erythro-1-(imidazol-4-yl)glycerol 3-phosphate = 3-(imidazol-4-yl)-2-oxopropyl phosphate + H2O. The protein operates within amino-acid biosynthesis; L-histidine biosynthesis; L-histidine from 5-phospho-alpha-D-ribose 1-diphosphate: step 6/9. This chain is Imidazoleglycerol-phosphate dehydratase, found in Salinibacter ruber (strain DSM 13855 / M31).